A 482-amino-acid polypeptide reads, in one-letter code: Aspartyl/glutamyl-tRNA(Asn/Gln) amidotransferase subunit B (482 aa).

It belongs to the GatB/GatE family. GatB subfamily. As to quaternary structure, heterotrimer of A, B and C subunits.

It catalyses the reaction L-glutamyl-tRNA(Gln) + L-glutamine + ATP + H2O = L-glutaminyl-tRNA(Gln) + L-glutamate + ADP + phosphate + H(+). The catalysed reaction is L-aspartyl-tRNA(Asn) + L-glutamine + ATP + H2O = L-asparaginyl-tRNA(Asn) + L-glutamate + ADP + phosphate + 2 H(+). In terms of biological role, allows the formation of correctly charged Asn-tRNA(Asn) or Gln-tRNA(Gln) through the transamidation of misacylated Asp-tRNA(Asn) or Glu-tRNA(Gln) in organisms which lack either or both of asparaginyl-tRNA or glutaminyl-tRNA synthetases. The reaction takes place in the presence of glutamine and ATP through an activated phospho-Asp-tRNA(Asn) or phospho-Glu-tRNA(Gln). In Methanoregula boonei (strain DSM 21154 / JCM 14090 / 6A8), this protein is Aspartyl/glutamyl-tRNA(Asn/Gln) amidotransferase subunit B.